The chain runs to 394 residues: Protein NDRG1 (394 aa).

Ser-2 bears the N-acetylserine mark. Phosphoserine occurs at positions 2, 319, and 326. The segment at 325–394 (RSRTASGSSV…AGPKSMEVSC (70 aa)) is disordered. The segment covering 327-339 (RTASGSSVTSLEG) has biased composition (polar residues). Thr-328 is modified (phosphothreonine). Position 330 is a phosphoserine (Ser-330). Ser-332 is subject to Phosphoserine; by SGK1. Phosphoserine is present on Ser-333. Residue Thr-335 is modified to Phosphothreonine. Residue Ser-336 is modified to Phosphoserine. 3 repeat units span residues 339-348 (GTRSRSHTSE), 349-358 (GPRSRSHTSE), and 359-368 (GSRSRSHTSE). The segment at 339-368 (GTRSRSHTSEGPRSRSHTSEGSRSRSHTSE) is 3 X 10 AA tandem repeats of G-[PST]-R-S-R-S-H-T-S-E. The residue at position 340 (Thr-340) is a Phosphothreonine. Ser-342 bears the Phosphoserine mark. Residues 345–371 (HTSEGPRSRSHTSEGSRSRSHTSEDAR) show a composition bias toward basic and acidic residues. The residue at position 346 (Thr-346) is a Phosphothreonine. Ser-352 carries the post-translational modification Phosphoserine. Thr-356 is modified (phosphothreonine; by SGK1). Phosphoserine is present on residues Ser-362 and Ser-364. Phosphothreonine occurs at positions 366 and 375. Polar residues predominate over residues 374–386 (ITPSSGATGNNAG).

It belongs to the NDRG family. Interacts with RAB4A (membrane-bound form); the interaction involves NDRG1 in vesicular recycling of CDH1. Interacts with APOA1, APOA2, PRA1 and RTN1. Post-translationally, under stress conditions, phosphorylated in the C-terminal on many serine and threonine residues. Phosphorylated in vitro by PKA. Phosphorylation enhanced by increased intracellular cAMP levels. Homocysteine induces dephosphorylation. Phosphorylation by SGK1 is cell cycle dependent.

It is found in the cytoplasm. The protein localises to the cytosol. The protein resides in the cytoskeleton. It localises to the microtubule organizing center. Its subcellular location is the centrosome. It is found in the nucleus. The protein localises to the cell membrane. Functionally, stress-responsive protein involved in hormone responses, cell growth, and differentiation. Acts as a tumor suppressor in many cell types. Necessary but not sufficient for p53/TP53-mediated caspase activation and apoptosis. Has a role in cell trafficking notably of the Schwann cell and is necessary for the maintenance and development of the peripheral nerve myelin sheath. Required for vesicular recycling of CDH1 and TF. May also function in lipid trafficking. Protects cells from spindle disruption damage. Functions in p53/TP53-dependent mitotic spindle checkpoint. Regulates microtubule dynamics and maintains euploidy. The chain is Protein NDRG1 (Ndrg1) from Rattus norvegicus (Rat).